The primary structure comprises 876 residues: GATOR2 complex protein MIOS (876 aa).

6 WD repeats span residues 59–101 (SDTP…NSKS), 112–156 (KHAR…SPEA), 182–222 (GQND…QKTF), 224–262 (NTKA…KPVF), 266–307 (EQPK…MPFG), and 400–440 (RAQS…KQYT). The C4-type zinc finger occupies 738-784 (VSCNFCGKSISYSCSAMPHQGRGFSQYGVSGSPTKSKVTSCPGCRKP). Zn(2+) is bound by residues C740, C743, C778, C781, C791, C830, C833, H835, H838, H841, C852, C857, and C861. The RING-type; atypical zinc finger occupies 785–866 (LPRCALCLMN…CTCKCMQLDT (82 aa)).

The protein belongs to the WD repeat mio family. Component of the GATOR2 subcomplex, composed of MIOS, SEC13, SEH1L, WDR24 and WDR59. The GATOR2 complex interacts with CASTOR1 and CASTOR2; the interaction is negatively regulated by arginine. The GATOR2 complex interacts with SESN1, SESN2 and SESN3; the interaction is negatively regulated by amino acids. Interacts with SAR1; the interaction is direct, disrupted by leucine and mediates the interaction of SAR1 with the GATOR2 complex to negatively regulate the TORC1 signaling upon leucine deprivation.

It is found in the lysosome membrane. Its activity is regulated as follows. The GATOR2 complex is negatively regulated by the upstream amino acid sensors CASTOR1 and SESN2, which sequester the GATOR2 complex in absence of amino acids. In the presence of abundant amino acids, GATOR2 is released from CASTOR1 and SESN2 and activated. Functionally, as a component of the GATOR2 complex, functions as an activator of the amino acid-sensing branch of the mTORC1 signaling pathway. The GATOR2 complex indirectly activates mTORC1 through the inhibition of the GATOR1 subcomplex. GATOR2 probably acts as an E3 ubiquitin-protein ligase toward GATOR1. In the presence of abundant amino acids, the GATOR2 complex mediates ubiquitination of the NPRL2 core component of the GATOR1 complex, leading to GATOR1 inactivation. In the absence of amino acids, GATOR2 is inhibited, activating the GATOR1 complex. Within the GATOR2 complex, MIOS is required to prevent autoubiquitination of WDR24, the catalytic subunit of the complex. The protein is GATOR2 complex protein MIOS of Danio rerio (Zebrafish).